A 296-amino-acid polypeptide reads, in one-letter code: Diguanylate cyclase DgcS (296 aa).

Residues 165-293 (GSVSLIVLDL…GRNCYKLSPT (129 aa)) form the GGDEF domain. Residues Asp-173, Leu-174, and Asp-216 each coordinate Mg(2+). Asp-216 is a catalytic residue.

Mg(2+) serves as cofactor.

The catalysed reaction is 2 GTP = 3',3'-c-di-GMP + 2 diphosphate. Functionally, catalyzes the synthesis of cyclic-di-GMP (c-di-GMP) via the condensation of 2 GTP molecules. May be involved in the regulation of formation of solid surface-associated biofilms and pellicles according to environmental conditions. The polypeptide is Diguanylate cyclase DgcS (Shewanella oneidensis (strain ATCC 700550 / JCM 31522 / CIP 106686 / LMG 19005 / NCIMB 14063 / MR-1)).